Here is a 557-residue protein sequence, read N- to C-terminus: MRSDIPETLQNFVSTKTVHQTWAKTFFCKPQAIFQPRTVDEIRELVDQARINGKTIMTVGSGHSPSDMTMTKEWLCNLDRFNQVLKKEEFSGPTRNGEGEEVKFVDLTVQAGCRIYELNRYLKENELAIQNLGSISDQSMAGVISTGTHGSTQYHGLVSQQVVSIEIMNSAGKLITCSSMENTQLFKAAMLSLGKIGIITHVTLRTIPKYTIKSKQEIIKFDTLLKNWDTVWLDSEFIRVWWFPYSGNCVCWRASKSSEPLSKPRDSWYGTWFGRKFYESLLWISVHICPHLTPLIEKFVFKNQYGDVETLGHGDVAVQNSVEGLNMDCLFSQFVNEWSTPLSSGQDVLIKLNDVIQTAREQNRFYVHAPIEVRCSNLTYSEKPFVDENDEPSLYPNKKWLAKRDRLSPGPIPGNNLRPYLDNSSNLRYDGDGANVTNDQLTLFINATMYRPFHTNVNSQEWYQLFEDIMTNASGRPHWAKNFIGVNGAHRTDQDLRKQLEFGGKTSYSMKGFNPILKKWFGENLVEYNKVRESMDPDNVFLSGKDWAVRNGILIDV.

Residues 26–209 (FFCKPQAIFQ…THVTLRTIPK (184 aa)) form the FAD-binding PCMH-type domain. His-63 bears the Pros-8alpha-FAD histidine mark.

The protein belongs to the oxygen-dependent FAD-linked oxidoreductase family. It depends on FAD as a cofactor.

The protein localises to the mitochondrion membrane. The enzyme catalyses D-arabinono-1,4-lactone + O2 = dehydro-D-arabinono-1,4-lactone + H2O2 + H(+). Its pathway is cofactor biosynthesis; D-erythroascorbate biosynthesis; dehydro-D-arabinono-1,4-lactone from D-arabinose: step 2/2. This Debaryomyces hansenii (strain ATCC 36239 / CBS 767 / BCRC 21394 / JCM 1990 / NBRC 0083 / IGC 2968) (Yeast) protein is D-arabinono-1,4-lactone oxidase (ALO1).